Here is a 292-residue protein sequence, read N- to C-terminus: Ribosomal protein L11 methyltransferase (292 aa).

The S-adenosyl-L-methionine site is built by threonine 136, glycine 159, aspartate 181, and asparagine 228.

The protein belongs to the methyltransferase superfamily. PrmA family.

The protein resides in the cytoplasm. The enzyme catalyses L-lysyl-[protein] + 3 S-adenosyl-L-methionine = N(6),N(6),N(6)-trimethyl-L-lysyl-[protein] + 3 S-adenosyl-L-homocysteine + 3 H(+). Its function is as follows. Methylates ribosomal protein L11. This chain is Ribosomal protein L11 methyltransferase, found in Rhizobium rhizogenes (strain K84 / ATCC BAA-868) (Agrobacterium radiobacter).